A 153-amino-acid polypeptide reads, in one-letter code: Nascent polypeptide-associated complex subunit beta (153 aa).

2 disordered regions span residues 1-40 (MSDV…ADDK) and 126-153 (LQKE…PKVE). Residues 23–32 (TPRRKVKRAP) are compositionally biased toward basic residues. The NAC-A/B domain occupies 36–101 (GADDKKLQLA…GEDKELTELV (66 aa)). The span at 132 to 147 (EDDDEIPDLVEGENFE) shows a compositional bias: acidic residues.

This sequence belongs to the NAC-beta family. In terms of assembly, part of the nascent polypeptide-associated complex (NAC), consisting of EGD2 and EGD1. NAC associates with ribosomes via EGD1.

It localises to the cytoplasm. It is found in the nucleus. In terms of biological role, component of the nascent polypeptide-associated complex (NAC), a dynamic component of the ribosomal exit tunnel, protecting the emerging polypeptides from interaction with other cytoplasmic proteins to ensure appropriate nascent protein targeting. The NAC complex also promotes mitochondrial protein import by enhancing productive ribosome interactions with the outer mitochondrial membrane and blocks the inappropriate interaction of ribosomes translating non-secretory nascent polypeptides with translocation sites in the membrane of the endoplasmic reticulum. EGD1 may act as a transcription factor that exert a negative effect on the expression of several genes that are transcribed by RNA polymerase II. The protein is Nascent polypeptide-associated complex subunit beta (EGD1) of Gibberella zeae (strain ATCC MYA-4620 / CBS 123657 / FGSC 9075 / NRRL 31084 / PH-1) (Wheat head blight fungus).